Reading from the N-terminus, the 366-residue chain is Peptide chain release factor 1 (366 aa).

Gln239 is modified (N5-methylglutamine).

This sequence belongs to the prokaryotic/mitochondrial release factor family. In terms of processing, methylated by PrmC. Methylation increases the termination efficiency of RF1.

The protein resides in the cytoplasm. Peptide chain release factor 1 directs the termination of translation in response to the peptide chain termination codons UAG and UAA. The sequence is that of Peptide chain release factor 1 from Baumannia cicadellinicola subsp. Homalodisca coagulata.